A 197-amino-acid chain; its full sequence is dTTP/UTP pyrophosphatase (197 aa).

Residue D70 is the Proton acceptor of the active site.

Belongs to the Maf family. YhdE subfamily. A divalent metal cation is required as a cofactor.

Its subcellular location is the cytoplasm. The enzyme catalyses dTTP + H2O = dTMP + diphosphate + H(+). The catalysed reaction is UTP + H2O = UMP + diphosphate + H(+). Functionally, nucleoside triphosphate pyrophosphatase that hydrolyzes dTTP and UTP. May have a dual role in cell division arrest and in preventing the incorporation of modified nucleotides into cellular nucleic acids. This Methanosarcina barkeri (strain Fusaro / DSM 804) protein is dTTP/UTP pyrophosphatase.